Consider the following 502-residue polypeptide: Cytochrome P450 monooxygenase prhN (502 aa).

Residues 14–30 (SGALLIVGILLLRWALW) form a helical membrane-spanning segment. The N-linked (GlcNAc...) asparagine glycan is linked to asparagine 165. Residue cysteine 443 coordinates heme. A glycan (N-linked (GlcNAc...) asparagine) is linked at asparagine 474.

It belongs to the cytochrome P450 family. Requires heme as cofactor.

It localises to the membrane. Its pathway is secondary metabolite biosynthesis; terpenoid biosynthesis. Cytochrome P450 monooxygenase; part of the gene cluster that mediates the biosynthesis of paraherquonin, a meroterpenoid with a unique, highly congested hexacyclic molecular architecture. The first step of the pathway is the synthesis of 3,5-dimethylorsellinic acid (DMOA) by the polyketide synthase prhL. Synthesis of DMOA is followed by farnesylation by the prenyltransferase prhE, methylesterification by the methyl-transferase prhM, epoxidation of the prenyl chain by the flavin-dependent monooxygenase prhF, and cyclization of the farnesyl moiety by the terpene cyclase prhH, to yield the tetracyclic intermediate, protoaustinoid A. The short chain dehydrogenase prhI then oxidizes the C-3 alcohol group of the terpene cyclase product to transform protoaustinoid A into protoaustinoid B. The FAD-binding monooxygenase prhJ catalyzes the oxidation of protoaustinoid B into preaustinoid A which is further oxidized into preaustinoid A1 by FAD-binding monooxygenase phrK. Finally, prhA leads to berkeleydione via the berkeleyone B intermediate. PrhA is a multifunctional dioxygenase that first desaturates at C5-C6 to form berkeleyone B, followed by rearrangement of the A/B-ring to form the cycloheptadiene moiety in berkeleydione. Berkeleydione serves as the key intermediate for the biosynthesis of paraherquonin as well as many other meroterpenoids. The cytochrome P450 monooxygenases prhB, prhD, and prhN, as well as the isomerase prhC, are probably involved in the late stage of paraherquonin biosynthesis, after the production of berkeleydione. Especially prhC might be a multifunctional enzyme that catalyzes the D-ring expansion via intramolecular methoxy rearrangement, as well as the hydrolysis of the expanded D-ring. The sequence is that of Cytochrome P450 monooxygenase prhN from Penicillium brasilianum.